The primary structure comprises 610 residues: Manganese lipoxygenase (610 aa).

A signal peptide spans 1 to 16 (MVALLIFLGIFTCVET). The region spanning 47–610 (FTLPNEDDEI…PGVIPFYLSV (564 aa)) is the Lipoxygenase domain. N-linked (GlcNAc...) asparagine glycosylation is found at Asn157 and Asn259. Mn(2+)-binding residues include His290 and His295. The N-linked (GlcNAc...) asparagine glycan is linked to Asn386. Mn(2+) contacts are provided by His475 and Asn479. An N-linked (GlcNAc...) asparagine glycan is attached at Asn540. Position 610 (Val610) interacts with Mn(2+).

The protein belongs to the lipoxygenase family. Manganese lipoxygenase subfamily. Mn(2+) serves as cofactor. N- and O-glycosylated.

It is found in the secreted. The enzyme catalyses (9Z,12Z)-octadecadienoate + O2 = (11S)-hydroperoxy-(9Z,12Z)-octadecadienoate. It catalyses the reaction (9Z,12Z)-octadecadienoate + O2 = (11R)-hydroperoxy-(9Z,12Z)-octadecadienoate. It carries out the reaction (9Z,12Z)-octadecadienoate + O2 = (13S)-hydroperoxy-(9Z,11E)-octadecadienoate. The catalysed reaction is (9Z,12Z,15Z)-octadecatrienoate + O2 = (11S)-hydroperoxy-(9Z,12Z,15Z)-octadecatrienoate. Functionally, lipoxygenase that metabolizes linoleic and alpha-linolenic acids to 9-, 11- and 13-hydroperoxy fatty acids. Oxidizes linoleic acid to mainly 11R-, 13S- and racemic 9-HPODE, and alpha-linolenic acid to 11-HPOTrE. The polypeptide is Manganese lipoxygenase (Fusarium oxysporum (strain Fo5176) (Fusarium vascular wilt)).